Reading from the N-terminus, the 265-residue chain is MMRALWTAASGMTAQQYNVDTIANNLSNVNTTGFKKIRAEFEDLIYQTHNRAGTPATENTLRPLGNQVGHGTKIAATQRIFEQGKMQSTNLLTDVAIEGDGFYKILLPDGTYAYTRDGSFKIDSNRELVTSQGYKVLPNILFPEEYIQNSITISEEGIVSVKIDTSNEPIELGQIEISRFINPAGLSAIGSNLFKETAGSGQEIAGIPGSEGMGRLRQGILEMSNVSIAEEMVTMIVAQRAYEINSKAIQTSDNMLGIANNLKRQ.

This sequence belongs to the flagella basal body rod proteins family. The basal body constitutes a major portion of the flagellar organelle and consists of four rings (L,P,S, and M) mounted on a central rod. The rod consists of about 26 subunits of FlgG in the distal portion, and FlgB, FlgC and FlgF are thought to build up the proximal portion of the rod with about 6 subunits each.

It is found in the bacterial flagellum basal body. This Borreliella burgdorferi (strain ATCC 35210 / DSM 4680 / CIP 102532 / B31) (Borrelia burgdorferi) protein is Flagellar basal-body rod protein FlgG (flgG).